Here is a 420-residue protein sequence, read N- to C-terminus: MAPK/MAK/MRK overlapping kinase (420 aa).

The Protein kinase domain occupies 4–285 (YKAIGKIGEG…AHQALQHPYF (282 aa)). Residues 10–18 (IGEGTFSEV) and Lys-33 each bind ATP. Asp-128 serves as the catalytic Proton acceptor. Residues 311–322 (PESSSHNWSFSQ) are compositionally biased toward polar residues. Positions 311–344 (PESSSHNWSFSQEGRKQKQSLRHEEGHARRQGPT) are disordered. Residues 323–338 (EGRKQKQSLRHEEGHA) are compositionally biased toward basic and acidic residues.

The protein belongs to the protein kinase superfamily. CMGC Ser/Thr protein kinase family. CDC2/CDKX subfamily. Requires Mg(2+) as cofactor. In terms of processing, autophosphorylated. In terms of tissue distribution, highly expressed in testis, and less in kidney, brain and lung.

The protein resides in the cytoplasm. The protein localises to the cell projection. It localises to the cilium. It is found in the nucleus. It catalyses the reaction L-seryl-[protein] + ATP = O-phospho-L-seryl-[protein] + ADP + H(+). The catalysed reaction is L-threonyl-[protein] + ATP = O-phospho-L-threonyl-[protein] + ADP + H(+). With respect to regulation, phosphorylation appears to increase the enzymatic activity. In terms of biological role, able to phosphorylate several exogenous substrates and to undergo autophosphorylation. Negatively regulates cilium length in a cAMP and mTORC1 signaling-dependent manner. In Mus musculus (Mouse), this protein is MAPK/MAK/MRK overlapping kinase (Mok).